The primary structure comprises 216 residues: Large ribosomal subunit protein uL24m (216 aa).

Residues 1–9 (MRLSALLAL) constitute a mitochondrion transit peptide. Position 24 is a phosphoserine (S24). The 34-residue stretch at 56 to 89 (LFCGDRVEILEGKDAGKQGKVVQVIRQRNWVVVE) folds into the KOW domain.

Belongs to the universal ribosomal protein uL24 family. In terms of assembly, component of the mitochondrial ribosome large subunit (39S) which comprises a 16S rRNA and about 50 distinct proteins.

Its subcellular location is the mitochondrion. This Bos taurus (Bovine) protein is Large ribosomal subunit protein uL24m (MRPL24).